A 237-amino-acid chain; its full sequence is NADH-ubiquinone oxidoreductase assembly factor N7BML (237 aa).

Over residues 214–223 the composition is skewed to basic and acidic residues; that stretch reads VEKERDDSGK. The segment at 214–237 is disordered; the sequence is VEKERDDSGKPAEWTPKAAVRRRG.

This sequence belongs to the complex I NDUFA12 subunit family.

The protein resides in the mitochondrion. Functionally, acts as an assembly factor of mitochondrial complex I. This chain is NADH-ubiquinone oxidoreductase assembly factor N7BML, found in Yarrowia lipolytica (strain CLIB 122 / E 150) (Yeast).